A 791-amino-acid polypeptide reads, in one-letter code: Cullin-2 (791 aa).

Positions 722 to 784 constitute a Cullin neddylation domain; that stretch reads DRKYYMECAI…KMYIQRTDQN (63 aa). A Glycyl lysine isopeptide (Lys-Gly) (interchain with G-Cter in NEDD8) cross-link involves residue lysine 736.

The protein belongs to the cullin family. As to quaternary structure, component of multiple CBC (Cul2-ElonginB-ElonginC) E3 ubiquitin-protein ligase complexes formed of cul-2, elb-1, elc-1, rbx-1 and a variable substrate recognition component. Component of the CBC(fem-1) E3 ubiquitin-protein ligase complex with fem-1, fem-2 and fem-3. The CBC(fem-1) complex interacts with tra-1 and promotes tra-1 degradation. Probable component of the CBC(lrr-1) E3 ubiquitin-protein ligase complex incuding cul-2, elb-1, elc-1, rbx-1 and lrr-1. The CBC(lrr-1) complex interacts with the DNA replisome complex at the end of S phase; the interaction promotes the release of components of the CMG helicase complex (a component of the replisome) from chromatin. Probable component of an CBC(zif-1) E3 ubiquitin-protein ligase including cul-2, elc-1, rbx-1 and zif-1. Part of an E3 ubiquitin-protein ligase complex including cul-2, elc-1 and zyg-11. Interacts with Skp1-related protein skr-10. Post-translationally, neddylated; which enhances the ubiquitination activity of CBC (Cul2-ElonginB-ElonginC) E3 ubiquitin-protein ligase complexes. In adults, highly expressed in meiotic cells and oocytes. In larvae, expressed in many proliferating cell types: P cells during the L1 stage; seam cells when they divide at every molt; vulval and somatic gonad cells in late L3 and L4 stages; and intestinal cells throughout larval development.

It is found in the cytoplasm. The protein resides in the nucleus. Its pathway is protein modification; protein ubiquitination. Its function is as follows. Core component of multiple cullin-RING-based CBC (Cul2-ElonginB-ElonginC) E3 ubiquitin-protein ligase complexes which mediate the ubiquitination and subsequent proteasomal degradation of target proteins. As a scaffold protein may contribute to catalysis through positioning of the substrate and the ubiquitin-conjugating enzyme. The functional specificity of the CBC complex depends on the variable substrate recognition component. May function in ubiquitin-mediated degradation of CKIs to target cki-1 for degradation. CBC(zif-1) may ensure germline precursor cell asymmetry by targeting germline proteins for destruction if expressed in non-germline cells. As part of the CBC(fem-1) complex directs ubiquitination of tra-1. As part of the CBC(lrr-1) complex, required for the ubiquitination and dissasembly of the CMG helicase complex from chromatin at the end of DNA replication. Positive cell-cycle regulator that is required at two distinct points in the cell cycle; the G1-to-S-phase transition and mitosis. Also required for proper cytoskeletal movement and mitotic chromosome condensation. The chain is Cullin-2 from Caenorhabditis elegans.